We begin with the raw amino-acid sequence, 221 residues long: uncharacterized protein (221 aa).

The Peptidase S8 domain occupies 1–189; the sequence is MDSGKDTNGY…NVVYCSEKAV (189 aa).

The protein belongs to the peptidase S8 family.

This is an uncharacterized protein from Aquifex aeolicus (strain VF5).